The primary structure comprises 503 residues: Aromatase 2 (503 aa).

Cysteine 437 is a binding site for heme.

This sequence belongs to the cytochrome P450 family. It depends on heme as a cofactor.

The protein localises to the membrane. It carries out the reaction testosterone + 3 reduced [NADPH--hemoprotein reductase] + 3 O2 = 17beta-estradiol + formate + 3 oxidized [NADPH--hemoprotein reductase] + 4 H2O + 4 H(+). It catalyses the reaction androst-4-ene-3,17-dione + 3 reduced [NADPH--hemoprotein reductase] + 3 O2 = estrone + formate + 3 oxidized [NADPH--hemoprotein reductase] + 4 H2O + 4 H(+). In terms of biological role, catalyzes the formation of aromatic C18 estrogens from C19 androgens. The polypeptide is Aromatase 2 (CYP19A2) (Sus scrofa (Pig)).